The primary structure comprises 384 residues: Substance-K receptor (384 aa).

At 1 to 32 (MGGRAIVTDTNIFSGLESNTTGVTAFSMPAWQ) the chain is on the extracellular side. Asn-19 carries an N-linked (GlcNAc...) asparagine glycan. A helical transmembrane segment spans residues 33–56 (LALWATAYLGLVLVAVTGNATVIW). Topologically, residues 57 to 69 (IILAHERMRTVTN) are cytoplasmic. Residues 70–90 (YFIINLALADLCMAAFNATFN) traverse the membrane as a helical segment. At 91-107 (FVYASHNIWYFGRAFCY) the chain is on the extracellular side. Cys-106 and Cys-181 are disulfide-bonded. A helical membrane pass occupies residues 108–129 (FQNLFPITAMFVSIYSMTAIAA). Over 130–149 (DRYMAIVHPFQPRLSAPITK) the chain is Cytoplasmic. The helical transmembrane segment at 150-170 (ATIAGIWLVALALASPQCFYS) threads the bilayer. The Extracellular segment spans residues 171 to 196 (TITVDQGATKCVVAWPNDNGGKMLLL). A helical membrane pass occupies residues 197 to 218 (YHLVVFVLVYFLPLVVMFVAYS). Residues 219-251 (VIGLTLWKRAVPRHQAHGANLRHLHAKKKFVKA) lie on the Cytoplasmic side of the membrane. A helical transmembrane segment spans residues 252–272 (MVLVVLTFAICWLPYHLYFIL). The Extracellular portion of the chain corresponds to 273 to 290 (GSFQKDIYYRKFIQQVYL). The chain crosses the membrane as a helical span at residues 291–310 (ALFWLAMSSTMYNPIIYCCL). At 311–384 (NHRFRSGFRL…SPQDVEPAAP (74 aa)) the chain is on the cytoplasmic side. Cys-324 is lipidated: S-palmitoyl cysteine.

The protein belongs to the G-protein coupled receptor 1 family.

It is found in the cell membrane. In terms of biological role, this is a receptor for the tachykinin neuropeptide substance K (neurokinin A). It is associated with G proteins that activate a phosphatidylinositol-calcium second messenger system. The rank order of affinity of this receptor to tachykinins is: substance K &gt; neuromedin-K &gt; substance P. The sequence is that of Substance-K receptor (TACR2) from Mesocricetus auratus (Golden hamster).